Reading from the N-terminus, the 539-residue chain is Chaperonin GroEL (539 aa).

Residues 29–32 (TIGP), 86–90 (DGTTT), G413, 476–478 (NAA), and D492 each bind ATP.

It belongs to the chaperonin (HSP60) family. As to quaternary structure, forms a cylinder of 14 subunits composed of two heptameric rings stacked back-to-back. Interacts with the co-chaperonin GroES.

It localises to the cytoplasm. It carries out the reaction ATP + H2O + a folded polypeptide = ADP + phosphate + an unfolded polypeptide.. Together with its co-chaperonin GroES, plays an essential role in assisting protein folding. The GroEL-GroES system forms a nano-cage that allows encapsulation of the non-native substrate proteins and provides a physical environment optimized to promote and accelerate protein folding. In Pediococcus pentosaceus (strain ATCC 25745 / CCUG 21536 / LMG 10740 / 183-1w), this protein is Chaperonin GroEL.